Consider the following 431-residue polypeptide: METISIINAADHVNEQVKIGVWLSNKRSSGKIAFLQLRDGTATFQGVALKNELGETAFAQLTDLAQETSLWVTGTIHADTRSPFGYELAISQFEVVGTSHDYPITPKDHGIDFLLDHRHLWLRSSRPNAIMRIRNEVIRAVYEFFNDRGFIKIDAPILTGSAPEGTTELFKTDYFGQDAYLSQSGQLYGEAGAMAFGKIFTFGPTFRAEKSKTRRHLTEFWQLEPEMAWMHQDESLEVQEQLVAYLGQAVIDHCPHELAVLDRDVATLQKYTKLPFPRVSYDDAITLLQANGFDVDWGVDFGSPEETFLAEHFDQPVFVLNYPKAIKAFYMQAHPTRDDVVIAADLLAPEGYGEIIGGSERSTDYDYLKERLLASGQDLQDYEWYLDLRKYGSVPHSGFGMGLERFLAWITLQDHVRETIPFPRMLHRIYP.

The protein belongs to the class-II aminoacyl-tRNA synthetase family. In terms of assembly, homodimer.

The protein localises to the cytoplasm. The enzyme catalyses tRNA(Asn) + L-asparagine + ATP = L-asparaginyl-tRNA(Asn) + AMP + diphosphate + H(+). This chain is Asparagine--tRNA ligase 1 (asnS1), found in Lactiplantibacillus plantarum (strain ATCC BAA-793 / NCIMB 8826 / WCFS1) (Lactobacillus plantarum).